Here is a 329-residue protein sequence, read N- to C-terminus: Calponin-3 (329 aa).

Lysine 23 carries the post-translational modification N6-acetyllysine. The Calponin-homology (CH) domain maps to 26 to 130; the sequence is HQAEEDLRNW…TLVALAGLAK (105 aa). An N6-methyllysine modification is found at lysine 158. 3 Calponin-like repeats span residues 164–189, 204–229, and 243–268; these read IGLQ…RHLY, ISLQ…RDIY, and ISLQ…RQVY. Residues 279–329 are disordered; that stretch reads PVIHNGSQGTGTNGSEISDSDYQAEYPDEYHGEYQDDYPRDYQYSDQGIDY. Residues 306 to 318 are compositionally biased toward basic and acidic residues; that stretch reads DEYHGEYQDDYPR. Serine 323 bears the Phosphoserine mark.

Belongs to the calponin family. Expressed in both non-smooth muscle tissues as well as smooth muscle tissues.

Its function is as follows. Thin filament-associated protein that is implicated in the regulation and modulation of smooth muscle contraction. It is capable of binding to actin, calmodulin and tropomyosin. The interaction of calponin with actin inhibits the actomyosin Mg-ATPase activity. The protein is Calponin-3 (CNN3) of Homo sapiens (Human).